Reading from the N-terminus, the 41-residue chain is Antifungal peptide 2 (41 aa).

Position 1 is a pyrrolidone carboxylic acid (Gln-1). Disulfide bonds link Cys-3/Cys-17, Cys-7/Cys-37, Cys-11/Cys-23, Cys-16/Cys-30, and Cys-35/Cys-39. A Chitin-binding type-1 domain is found at 4–41; sequence ASRCPRPCNAGLCCSIYGYCGSGAAYCGAGNCRCQCRG.

Monomer.

Its function is as follows. Has antifungal activity against P.infestans, A.lycopersici, V.dahliae, G.zeae, A.nicotianae, F.moniliforme, F.oxysporum and C.gossypii. The protein is Antifungal peptide 2 of Eucommia ulmoides (Hardy rubber tree).